The chain runs to 235 residues: Large ribosomal subunit protein uL1 (235 aa).

The protein belongs to the universal ribosomal protein uL1 family. In terms of assembly, part of the 50S ribosomal subunit.

Binds directly to 23S rRNA. The L1 stalk is quite mobile in the ribosome, and is involved in E site tRNA release. In terms of biological role, protein L1 is also a translational repressor protein, it controls the translation of the L11 operon by binding to its mRNA. This is Large ribosomal subunit protein uL1 from Mycobacterium leprae (strain Br4923).